The following is a 332-amino-acid chain: Monoterpene synthase 25 (332 aa).

Mg(2+)-binding residues include D115, E180, N240, S244, and E248. Residues 115–121 (DDPVVFD) carry the DDXXXXD motif motif. The short motif at 240-248 (NDILSFYKE) is the NSE/DTE motif element.

The protein belongs to the trichodiene synthase family. Mg(2+) is required as a cofactor.

Functionally, terpene cyclase that catalyzes the cyclization of geranyl diphosphate (GPP) to myrcene and linalool. The chain is Monoterpene synthase 25 from Postia placenta (strain ATCC 44394 / Madison 698-R) (Brown rot fungus).